The chain runs to 201 residues: Imidazole glycerol phosphate synthase subunit HisH 1 (201 aa).

A Glutamine amidotransferase type-1 domain is found at 1 to 201; sequence MIALIDYKAG…LKLLENFIRL (201 aa). Cys-80 acts as the Nucleophile in catalysis. Active-site residues include His-183 and Glu-185.

In terms of assembly, heterodimer of HisH and HisF.

It is found in the cytoplasm. The enzyme catalyses 5-[(5-phospho-1-deoxy-D-ribulos-1-ylimino)methylamino]-1-(5-phospho-beta-D-ribosyl)imidazole-4-carboxamide + L-glutamine = D-erythro-1-(imidazol-4-yl)glycerol 3-phosphate + 5-amino-1-(5-phospho-beta-D-ribosyl)imidazole-4-carboxamide + L-glutamate + H(+). It carries out the reaction L-glutamine + H2O = L-glutamate + NH4(+). The protein operates within amino-acid biosynthesis; L-histidine biosynthesis; L-histidine from 5-phospho-alpha-D-ribose 1-diphosphate: step 5/9. In terms of biological role, IGPS catalyzes the conversion of PRFAR and glutamine to IGP, AICAR and glutamate. The HisH subunit provides the glutamine amidotransferase activity that produces the ammonia necessary to HisF for the synthesis of IGP and AICAR. The protein is Imidazole glycerol phosphate synthase subunit HisH 1 of Campylobacter jejuni (strain RM1221).